A 294-amino-acid chain; its full sequence is RAB7A-interacting MON1-CCZ1 complex subunit 1 (294 aa).

Position 2 is an N-acetylalanine (A2).

Belongs to the RIMOC1 family. In terms of assembly, interacts with the MON1A-CCZ1B complex. Interacts with GDP-bound RAB7A and promotes its interaction with the MON1A-CCZ1B complex.

It localises to the cytoplasm. It is found in the cytosol. Functionally, plays an important role in the removal of damaged mitochondria via mitophagy by controlling the stability and localization of RAB7A. Required for the recruitment of RAB7A and ATG9A vesicles to damaged mitochondria and promotes the stability of RAB7A by inhibiting its proteasomal degradation during mitophagy. The polypeptide is RAB7A-interacting MON1-CCZ1 complex subunit 1 (Homo sapiens (Human)).